Reading from the N-terminus, the 317-residue chain is Large ribosomal subunit protein uL10 (317 aa).

Over residues serine 280–alanine 290 the composition is skewed to low complexity. Residues serine 280–aspartate 317 form a disordered region. Residues threonine 291–serine 302 are compositionally biased toward basic and acidic residues. A Phosphoserine modification is found at serine 302. Serine 304 carries the phosphoserine; by CK1 modification.

It belongs to the universal ribosomal protein uL10 family. P0 forms a pentameric complex by interaction with dimers of P1 and P2.

It is found in the cytoplasm. The protein resides in the nucleus. Its function is as follows. Ribosomal protein P0 is the functional equivalent of E.coli protein L10. The protein is Large ribosomal subunit protein uL10 (RpLP0) of Drosophila melanogaster (Fruit fly).